We begin with the raw amino-acid sequence, 325 residues long: Lipoyl synthase (325 aa).

The disordered stretch occupies residues 1 to 24; it reads MPIAPDRVRHPEKANRPDNPIQRK. [4Fe-4S] cluster-binding residues include C54, C59, C65, C80, C84, C87, and S293. A Radical SAM core domain is found at 66 to 282; sequence WKKKHATFMI…VTVGRGKGFL (217 aa).

Belongs to the radical SAM superfamily. Lipoyl synthase family. [4Fe-4S] cluster is required as a cofactor.

Its subcellular location is the cytoplasm. The catalysed reaction is [[Fe-S] cluster scaffold protein carrying a second [4Fe-4S](2+) cluster] + N(6)-octanoyl-L-lysyl-[protein] + 2 oxidized [2Fe-2S]-[ferredoxin] + 2 S-adenosyl-L-methionine + 4 H(+) = [[Fe-S] cluster scaffold protein] + N(6)-[(R)-dihydrolipoyl]-L-lysyl-[protein] + 4 Fe(3+) + 2 hydrogen sulfide + 2 5'-deoxyadenosine + 2 L-methionine + 2 reduced [2Fe-2S]-[ferredoxin]. It participates in protein modification; protein lipoylation via endogenous pathway; protein N(6)-(lipoyl)lysine from octanoyl-[acyl-carrier-protein]: step 2/2. Functionally, catalyzes the radical-mediated insertion of two sulfur atoms into the C-6 and C-8 positions of the octanoyl moiety bound to the lipoyl domains of lipoate-dependent enzymes, thereby converting the octanoylated domains into lipoylated derivatives. This is Lipoyl synthase from Rhodospirillum centenum (strain ATCC 51521 / SW).